Here is a 70-residue protein sequence, read N- to C-terminus: UPF0352 protein Sden_2336 (70 aa).

This sequence belongs to the UPF0352 family.

The sequence is that of UPF0352 protein Sden_2336 from Shewanella denitrificans (strain OS217 / ATCC BAA-1090 / DSM 15013).